Reading from the N-terminus, the 351-residue chain is Holliday junction branch migration complex subunit RuvB (351 aa).

Residues 4 to 199 (DNPQFNQWYE…FGIINSLQYY (196 aa)) are large ATPase domain (RuvB-L). Residues leucine 38, arginine 39, glycine 80, lysine 83, threonine 84, threonine 85, 146–148 (EDY), arginine 189, tyrosine 199, and arginine 236 contribute to the ATP site. Threonine 84 provides a ligand contact to Mg(2+). Residues 200–270 (TPEELQQIVV…IVTIGLDKLR (71 aa)) form a small ATPAse domain (RuvB-S) region. The segment at 273–351 (NRGLDETDHK…HLGHAYQRKL (79 aa)) is head domain (RuvB-H). DNA-binding residues include arginine 328 and arginine 333.

It belongs to the RuvB family. As to quaternary structure, homohexamer. Forms an RuvA(8)-RuvB(12)-Holliday junction (HJ) complex. HJ DNA is sandwiched between 2 RuvA tetramers; dsDNA enters through RuvA and exits via RuvB. An RuvB hexamer assembles on each DNA strand where it exits the tetramer. Each RuvB hexamer is contacted by two RuvA subunits (via domain III) on 2 adjacent RuvB subunits; this complex drives branch migration. In the full resolvosome a probable DNA-RuvA(4)-RuvB(12)-RuvC(2) complex forms which resolves the HJ.

The protein resides in the cytoplasm. It carries out the reaction ATP + H2O = ADP + phosphate + H(+). The RuvA-RuvB-RuvC complex processes Holliday junction (HJ) DNA during genetic recombination and DNA repair, while the RuvA-RuvB complex plays an important role in the rescue of blocked DNA replication forks via replication fork reversal (RFR). RuvA specifically binds to HJ cruciform DNA, conferring on it an open structure. The RuvB hexamer acts as an ATP-dependent pump, pulling dsDNA into and through the RuvAB complex. RuvB forms 2 homohexamers on either side of HJ DNA bound by 1 or 2 RuvA tetramers; 4 subunits per hexamer contact DNA at a time. Coordinated motions by a converter formed by DNA-disengaged RuvB subunits stimulates ATP hydrolysis and nucleotide exchange. Immobilization of the converter enables RuvB to convert the ATP-contained energy into a lever motion, pulling 2 nucleotides of DNA out of the RuvA tetramer per ATP hydrolyzed, thus driving DNA branch migration. The RuvB motors rotate together with the DNA substrate, which together with the progressing nucleotide cycle form the mechanistic basis for DNA recombination by continuous HJ branch migration. Branch migration allows RuvC to scan DNA until it finds its consensus sequence, where it cleaves and resolves cruciform DNA. The chain is Holliday junction branch migration complex subunit RuvB from Leuconostoc mesenteroides subsp. mesenteroides (strain ATCC 8293 / DSM 20343 / BCRC 11652 / CCM 1803 / JCM 6124 / NCDO 523 / NBRC 100496 / NCIMB 8023 / NCTC 12954 / NRRL B-1118 / 37Y).